Reading from the N-terminus, the 390-residue chain is GDSL esterase/lipase At1g28640 (390 aa).

Residues 1–26 (MASSLEKLISSFLLVLYSTTIIVASS) form the signal peptide. The active-site Nucleophile is the S42. N-linked (GlcNAc...) asparagine glycans are attached at residues N105, N138, and N321. Active-site residues include D346 and H349. N364 is a glycosylation site (N-linked (GlcNAc...) asparagine).

This sequence belongs to the 'GDSL' lipolytic enzyme family.

The protein localises to the secreted. The sequence is that of GDSL esterase/lipase At1g28640 from Arabidopsis thaliana (Mouse-ear cress).